We begin with the raw amino-acid sequence, 95 residues long: Acylphosphatase (95 aa).

The Acylphosphatase-like domain maps to 6–94 (RVRVIVKGIV…EDFTGFSVRY (89 aa)). Catalysis depends on residues Arg-21 and Asn-39.

This sequence belongs to the acylphosphatase family.

The enzyme catalyses an acyl phosphate + H2O = a carboxylate + phosphate + H(+). This chain is Acylphosphatase (acyP), found in Caldivirga maquilingensis (strain ATCC 700844 / DSM 13496 / JCM 10307 / IC-167).